The primary structure comprises 143 residues: Sirohydrochlorin cobaltochelatase (143 aa).

Catalysis depends on His9, which acts as the Proton acceptor. His9 contributes to the Co(2+) binding site. Position 9 (His9) interacts with Ni(2+). Substrate is bound by residues Glu45 and 70-75; that span reads LAHGNH. A Co(2+)-binding site is contributed by His75. His75 contacts Ni(2+).

This sequence belongs to the CbiX family. CbiXS subfamily. As to quaternary structure, homotetramer; dimer of dimers.

The enzyme catalyses Co-sirohydrochlorin + 2 H(+) = sirohydrochlorin + Co(2+). The catalysed reaction is Ni-sirohydrochlorin + 2 H(+) = sirohydrochlorin + Ni(2+). It functions in the pathway cofactor biosynthesis; adenosylcobalamin biosynthesis; cob(II)yrinate a,c-diamide from sirohydrochlorin (anaerobic route): step 1/10. Functionally, catalyzes the insertion of Co(2+) into sirohydrochlorin as part of the anaerobic pathway to cobalamin biosynthesis. Involved in the biosynthesis of the unique nickel-containing tetrapyrrole coenzyme F430, the prosthetic group of methyl-coenzyme M reductase (MCR), which plays a key role in methanogenesis and anaerobic methane oxidation. Catalyzes the insertion of Ni(2+) into sirohydrochlorin to yield Ni-sirohydrochlorin. The polypeptide is Sirohydrochlorin cobaltochelatase (Methanococcus aeolicus (strain ATCC BAA-1280 / DSM 17508 / OCM 812 / Nankai-3)).